A 315-amino-acid polypeptide reads, in one-letter code: Eukaryotic translation initiation factor 2 subunit 1 (315 aa).

The region spanning Glu17 to Arg88 is the S1 motif domain. Ser49 carries the post-translational modification Phosphoserine; by HRI. Ser52 is modified (phosphoserine). Position 141 is an N6-acetyllysine (Lys141). At Ser158 the chain carries Phosphoserine. Thr279 and Thr281 each carry phosphothreonine. The tract at residues Arg292–Asp315 is disordered. Over residues Glu299–Glu308 the composition is skewed to acidic residues.

This sequence belongs to the eIF-2-alpha family. In terms of assembly, eukaryotic translation initiation factor 2 eIF2 is a heterotrimeric complex composed of an alpha (EIF2S1), a beta (EIF2S2) and a gamma (EIF2S3) chain. eIF2 is member of the 43S pre-initiation complex (43S PIC). eIF2 forms a complex with at least CELF1/CUGBP1, CALR, CALR3, EIF2S1, EIF2S2, HSP90B1 and HSPA5. Interaction with METAP2 protects EIF2S1 from inhibitory phosphorylation. Interacts with ABCF1. Associates with ribosomes. Interacts with DDX3X in an RNA-independent manner. In terms of processing, phosphorylation at Ser-49 and Ser-52 stabilizes the eIF-2/GDP/eIF2B complex and prevents GDP/GTP exchange reaction, thus impairing the recycling of eIF-2 between successive rounds of initiation and leading to global inhibition of translation, while concomitantly initiating the preferential translation of integrated stress response (ISR)-specific mRNAs. Substrate for at least 4 kinases: EIF2AK1/HRI, EIF2AK2/PKR, EIF2AK3/PERK and EIF2AK4/GCN2. Phosphorylation at Ser-52 by the EIF2AK3/PERK protein kinase occurs in response to the unfolded protein response. Phosphorylation on Ser-52 by the EIF2AK4/GCN2 protein kinase occurs in response to amino acid starvation and UV irradiation. Phosphorylation at Ser-52 by EIF2AK1/HRI in response to mitochondrial damage promotes relocalization to the mitochondrial surface.

Its subcellular location is the cytoplasm. The protein localises to the stress granule. It localises to the cytosol. The protein resides in the mitochondrion. Activity is regulated by phosphorylation at Ser-49 and Ser-52, which stabilizes the eIF2/GDP/eIF2B complex and prevents the eIF2B-mediated exchange of GDP for GTP, thereby preventing the formation of the 43S pre-initiation complex (43S PIC). This results in the global attenuation of 5' cap-dependent protein synthesis and concomitant translation of ISR-specific mRNAs that contain a short upstream open reading frame (uORF) in their 5' UTR, such as ATF4, ATF5, DDIT3/CHOP and PPP1R15A/GADD34. Its function is as follows. Member of the eIF2 complex that functions in the early steps of protein synthesis by forming a ternary complex with GTP and initiator tRNA. This complex binds to a 40S ribosomal subunit, followed by mRNA binding to form a 43S pre-initiation complex. Junction of the 60S ribosomal subunit to form the 80S initiation complex is preceded by hydrolysis of the GTP bound to eIF2 and release of an eIF2-GDP binary complex. In order for eIF2 to recycle and catalyze another round of initiation, the GDP bound to eIF2 must exchange with GTP by way of a reaction catalyzed by eIF2B. EIF2S1/eIF2-alpha is a key component of the integrated stress response (ISR), required for adaptation to various stress: phosphorylation by metabolic-stress sensing protein kinases (EIF2AK1/HRI, EIF2AK2/PKR, EIF2AK3/PERK and EIF2AK4/GCN2) in response to stress converts EIF2S1/eIF2-alpha in a global protein synthesis inhibitor, leading to a attenuation of cap-dependent translation, while concomitantly initiating the preferential translation of ISR-specific mRNAs, such as the transcriptional activators ATF4 and QRICH1, and hence allowing ATF4- and QRICH1-mediated reprogramming. EIF2S1/eIF2-alpha also acts as an activator of mitophagy in response to mitochondrial damage: phosphorylation by EIF2AK1/HRI promotes relocalization to the mitochondrial surface, thereby triggering PRKN-independent mitophagy. This Sus scrofa (Pig) protein is Eukaryotic translation initiation factor 2 subunit 1 (EIF2S1).